Reading from the N-terminus, the 252-residue chain is 3-deoxy-manno-octulosonate cytidylyltransferase (252 aa).

This sequence belongs to the KdsB family.

Its subcellular location is the cytoplasm. The catalysed reaction is 3-deoxy-alpha-D-manno-oct-2-ulosonate + CTP = CMP-3-deoxy-beta-D-manno-octulosonate + diphosphate. It participates in nucleotide-sugar biosynthesis; CMP-3-deoxy-D-manno-octulosonate biosynthesis; CMP-3-deoxy-D-manno-octulosonate from 3-deoxy-D-manno-octulosonate and CTP: step 1/1. The protein operates within bacterial outer membrane biogenesis; lipopolysaccharide biosynthesis. Functionally, activates KDO (a required 8-carbon sugar) for incorporation into bacterial lipopolysaccharide in Gram-negative bacteria. The polypeptide is 3-deoxy-manno-octulosonate cytidylyltransferase (Nitratidesulfovibrio vulgaris (strain ATCC 29579 / DSM 644 / CCUG 34227 / NCIMB 8303 / VKM B-1760 / Hildenborough) (Desulfovibrio vulgaris)).